The chain runs to 460 residues: Nuclear distribution protein PAC1 (460 aa).

A LisH domain is found at 9 to 41 (QAEELHKSIIAYLAANNLQDSANAMRTELGLGE). The stretch at 61 to 88 (TSVVRLQKKIMDLEAQTQTLQTELNSAT) forms a coiled coil. The segment covering 82-92 (TELNSATPTSN) has biased composition (polar residues). Residues 82 to 105 (TELNSATPTSNRRGDPSSWLPAGP) form a disordered region. WD repeat units follow at residues 112–153 (SHRT…RTVK), 155–195 (HTKA…QNIR), 199–246 (GHDH…CVKT), 249–288 (GHAD…PEAK), 293–354 (GHEH…KTLI), 355–394 (GHDN…KCVK), and 399–456 (SHEH…MSLR). The interval 414 to 433 (IKDKGPGEETNGDVGTPKKA) is disordered.

It belongs to the WD repeat LIS1/nudF family. As to quaternary structure, self-associates. Interacts with NDL1 and dynein.

It is found in the cytoplasm. Its subcellular location is the cytoskeleton. The protein localises to the spindle pole. Its function is as follows. Positively regulates the activity of the minus-end directed microtubule motor protein dynein. May enhance dynein-mediated microtubule sliding by targeting dynein to the microtubule plus end. Required for nuclear migration during vegetative growth as well as development. Required for retrograde early endosome (EE) transport from the hyphal tip. Required for localization of dynein to the mitotic spindle poles. Recruits additional proteins to the dynein complex at SPBs. The protein is Nuclear distribution protein PAC1 of Gibberella zeae (strain ATCC MYA-4620 / CBS 123657 / FGSC 9075 / NRRL 31084 / PH-1) (Wheat head blight fungus).